The sequence spans 603 residues: NADH-ubiquinone oxidoreductase chain 5 (603 aa).

Transmembrane regions (helical) follow at residues 4 to 24, 36 to 56, 87 to 107, 122 to 142, 171 to 191, 211 to 233, 241 to 261, 272 to 292, 301 to 320, 325 to 347, 370 to 390, 406 to 422, 488 to 508, and 583 to 603; these read YTSI…ATLV, VKTT…LYIF, MMFI…SLWY, LIFL…QLFI, AVLY…WFLL, LPLM…HPWL, TPVS…FLLI, LTQN…AMCA, IVAF…IGIN, AFLH…GSII, STSL…TGFY, AWAL…TSAY, LLAL…TLMT, and MIKL…LLMV.

It belongs to the complex I subunit 5 family. As to quaternary structure, core subunit of respiratory chain NADH dehydrogenase (Complex I) which is composed of 45 different subunits.

It localises to the mitochondrion inner membrane. The enzyme catalyses a ubiquinone + NADH + 5 H(+)(in) = a ubiquinol + NAD(+) + 4 H(+)(out). Functionally, core subunit of the mitochondrial membrane respiratory chain NADH dehydrogenase (Complex I) which catalyzes electron transfer from NADH through the respiratory chain, using ubiquinone as an electron acceptor. Essential for the catalytic activity and assembly of complex I. In Papio hamadryas (Hamadryas baboon), this protein is NADH-ubiquinone oxidoreductase chain 5 (MT-ND5).